The following is a 239-amino-acid chain: LexA repressor (239 aa).

A DNA-binding region (H-T-H motif) is located at residues 26 to 46; the sequence is FDEMKDALDLASKSGIHRLIT. Active-site for autocatalytic cleavage activity residues include Ser-159 and Lys-197.

Belongs to the peptidase S24 family. As to quaternary structure, homodimer.

It carries out the reaction Hydrolysis of Ala-|-Gly bond in repressor LexA.. Its function is as follows. Represses a number of genes involved in the response to DNA damage (SOS response), including recA and lexA. In the presence of single-stranded DNA, RecA interacts with LexA causing an autocatalytic cleavage which disrupts the DNA-binding part of LexA, leading to derepression of the SOS regulon and eventually DNA repair. The protein is LexA repressor of Rhizobium etli (strain CIAT 652).